We begin with the raw amino-acid sequence, 261 residues long: Methyl-coenzyme M reductase subunit gamma (261 aa).

Coenzyme M is bound at residue Arg123.

The protein belongs to the methyl-coenzyme M reductase gamma subunit family. As to quaternary structure, MCR is a hexamer of two alpha, two beta, and two gamma chains, forming a dimer of heterotrimers. Requires coenzyme F430 as cofactor.

It is found in the cytoplasm. It carries out the reaction coenzyme B + methyl-coenzyme M = methane + coenzyme M-coenzyme B heterodisulfide. The protein operates within one-carbon metabolism; methyl-coenzyme M reduction; methane from methyl-coenzyme M: step 1/1. In terms of biological role, component of the methyl-coenzyme M reductase (MCR) I that catalyzes the reductive cleavage of methyl-coenzyme M (CoM-S-CH3 or 2-(methylthio)ethanesulfonate) using coenzyme B (CoB or 7-mercaptoheptanoylthreonine phosphate) as reductant which results in the production of methane and the mixed heterodisulfide of CoB and CoM (CoM-S-S-CoB). This is the final step in methanogenesis. The sequence is that of Methyl-coenzyme M reductase subunit gamma (mcrG) from Methanococcus voltae.